A 43-amino-acid chain; its full sequence is METATIFSIFFSCLLIGLTGYSLYTSFGNASSELRDPFEEHED.

The chain crosses the membrane as a helical span at residues 5–27 (TIFSIFFSCLLIGLTGYSLYTSF).

The protein belongs to the PsbN family.

Its subcellular location is the plastid. The protein resides in the chloroplast thylakoid membrane. Its function is as follows. May play a role in photosystem I and II biogenesis. The polypeptide is Protein PsbN (Mesostigma viride (Green alga)).